A 473-amino-acid polypeptide reads, in one-letter code: ATP synthase subunit beta (473 aa).

Residue 153–160 (GGAGVGKT) participates in ATP binding.

It belongs to the ATPase alpha/beta chains family. As to quaternary structure, F-type ATPases have 2 components, CF(1) - the catalytic core - and CF(0) - the membrane proton channel. CF(1) has five subunits: alpha(3), beta(3), gamma(1), delta(1), epsilon(1). CF(0) has three main subunits: a(1), b(2) and c(9-12). The alpha and beta chains form an alternating ring which encloses part of the gamma chain. CF(1) is attached to CF(0) by a central stalk formed by the gamma and epsilon chains, while a peripheral stalk is formed by the delta and b chains.

Its subcellular location is the cell membrane. The catalysed reaction is ATP + H2O + 4 H(+)(in) = ADP + phosphate + 5 H(+)(out). Produces ATP from ADP in the presence of a proton gradient across the membrane. The catalytic sites are hosted primarily by the beta subunits. This Rickettsia africae (strain ESF-5) protein is ATP synthase subunit beta.